The primary structure comprises 183 residues: Small ribosomal subunit protein cS23y (183 aa).

It belongs to the chloroplast-specific ribosomal protein cS23 family. As to quaternary structure, part of the 30S ribosomal subunit.

Its subcellular location is the plastid. It localises to the chloroplast. Its function is as follows. Component of the chloroplast ribosome (chloro-ribosome), a dedicated translation machinery responsible for the synthesis of chloroplast genome-encoded proteins, including proteins of the transcription and translation machinery and components of the photosynthetic apparatus. This is Small ribosomal subunit protein cS23y from Arabidopsis thaliana (Mouse-ear cress).